The following is a 488-amino-acid chain: Putative sugar transporter ERD6-like 13 (488 aa).

The next 12 helical transmembrane spans lie at 51–71 (LILL…GTAA), 89–109 (LAEF…GAAM), 116–138 (VFGR…LMIA), 151–171 (LFLG…IVEI), 182–202 (AINS…GSVI), 207–227 (LALI…FIPE), 291–311 (VGIG…TFYL), 324–344 (VGVM…IVIV), 353–373 (LTVA…SFLF), 390–410 (GVLV…WVMI), 423–445 (GTLC…NFLF), and 451–471 (GVFF…MKMV).

Belongs to the major facilitator superfamily. Sugar transporter (TC 2.A.1.1) family.

Its subcellular location is the membrane. In terms of biological role, sugar transporter. The chain is Putative sugar transporter ERD6-like 13 from Arabidopsis thaliana (Mouse-ear cress).